We begin with the raw amino-acid sequence, 197 residues long: U1 small nuclear ribonucleoprotein C (197 aa).

A Matrin-type zinc finger spans residues 4–36 (YYCEYCDIYLTHSSPVGRRQHNQGRKHISAKIE). Residues 128–137 (FHNNKRINNI) show a composition bias toward low complexity. The interval 128 to 178 (FHNNKRINNIPKPYNNYTNKPITNSSYKNDKQDYRNNNESNDNMNSNNFSN) is disordered. A compositionally biased stretch (polar residues) spans 142–154 (NNYTNKPITNSSY). Residues 164–178 (NNESNDNMNSNNFSN) are compositionally biased toward low complexity.

The protein belongs to the U1 small nuclear ribonucleoprotein C family. In terms of assembly, U1 snRNP is composed of the 7 core Sm proteins B/B', D1, D2, D3, E, F and G that assemble in a heptameric protein ring on the Sm site of the small nuclear RNA to form the core snRNP, and at least 3 U1 snRNP-specific proteins U1-70K, U1-A and U1-C. U1-C interacts with U1 snRNA and the 5' splice-site region of the pre-mRNA.

The protein localises to the nucleus. Component of the spliceosomal U1 snRNP, which is essential for recognition of the pre-mRNA 5' splice-site and the subsequent assembly of the spliceosome. U1-C is directly involved in initial 5' splice-site recognition for both constitutive and regulated alternative splicing. The interaction with the 5' splice-site seems to precede base-pairing between the pre-mRNA and the U1 snRNA. Stimulates commitment or early (E) complex formation by stabilizing the base pairing of the 5' end of the U1 snRNA and the 5' splice-site region. The sequence is that of U1 small nuclear ribonucleoprotein C (SNRPC) from Plasmodium berghei (strain Anka).